A 1284-amino-acid polypeptide reads, in one-letter code: Putative late blight resistance protein homolog R1B-16 (1284 aa).

Residues 533-555 (PRMNEEIVGFKDVIENLRNQLLN) are a coiled coil. Residues 534–821 (RMNEEIVGFK…SESFIKSSEG (288 aa)) form the NB-ARC domain. 567–574 (GMPGLGKT) serves as a coordination point for ATP. LRR repeat units follow at residues 942-966 (FKFLKVLDLEHQVVIDSIPTELFYL), 985-1010 (LWNLETLILKHVSRCTVLLPSTVWDM), 1013-1036 (LRHLHIPNFRPENEEALLENSAKL), 1085-1107 (PIRLEILKLYRSKAFNTIPFCIS), 1108-1135 (APNLKYLKLSRSYMDSQYLSETADHLKN), 1159-1181 (FPQLKILKLEYLALMKWIVADDA), 1182-1206 (FPNLEQLVLHECRHLMEIPSCFMDI), and 1219-1243 (ESVVKSAMNIQETQVEDYQNTNFKL). Positions 1217-1284 (CNESVVKSAM…VEKQRKRGML (68 aa)) constitute an HMA domain.

This sequence belongs to the disease resistance NB-LRR family.

It localises to the cytoplasm. The protein resides in the membrane. Confers resistance to late blight (Phytophthora infestans) races carrying the avirulence gene Avr1. Resistance proteins guard the plant against pathogens that contain an appropriate avirulence protein via an indirect interaction with this avirulence protein. That triggers a defense system including the hypersensitive response, which restricts the pathogen growth. The polypeptide is Putative late blight resistance protein homolog R1B-16 (R1B-16) (Solanum demissum (Wild potato)).